The primary structure comprises 175 residues: Protein TWIN SISTER of FT (175 aa).

Belongs to the phosphatidylethanolamine-binding protein family.

Its subcellular location is the cytoplasm. Its function is as follows. May form complexes with phosphorylated ligands by interfering with kinases and their effectors. This chain is Protein TWIN SISTER of FT (TSF), found in Arabidopsis thaliana (Mouse-ear cress).